The following is a 275-amino-acid chain: Large ribosomal subunit protein uL2c (275 aa).

Residues 219–267 (TVRGSVMNPCDHPHGGGEGRTPIGRTRPLTPWGKPALGKKTRKTKKLSS) are disordered. A compositionally biased stretch (basic residues) spans 255 to 264 (LGKKTRKTKK).

It belongs to the universal ribosomal protein uL2 family. As to quaternary structure, part of the 50S ribosomal subunit.

The protein localises to the plastid. The protein resides in the chloroplast. The chain is Large ribosomal subunit protein uL2c (rpl2) from Thalassiosira pseudonana (Marine diatom).